Reading from the N-terminus, the 314-residue chain is Ribosomal RNA small subunit methyltransferase H (314 aa).

S-adenosyl-L-methionine is bound by residues 36-38, Asp-56, Phe-82, Asp-104, and Gln-111; that span reads GGH.

Belongs to the methyltransferase superfamily. RsmH family.

It localises to the cytoplasm. It catalyses the reaction cytidine(1402) in 16S rRNA + S-adenosyl-L-methionine = N(4)-methylcytidine(1402) in 16S rRNA + S-adenosyl-L-homocysteine + H(+). Its function is as follows. Specifically methylates the N4 position of cytidine in position 1402 (C1402) of 16S rRNA. This chain is Ribosomal RNA small subunit methyltransferase H, found in Ectopseudomonas mendocina (strain ymp) (Pseudomonas mendocina).